A 180-amino-acid polypeptide reads, in one-letter code: ATP synthase subunit delta (180 aa).

The protein belongs to the ATPase delta chain family. F-type ATPases have 2 components, F(1) - the catalytic core - and F(0) - the membrane proton channel. F(1) has five subunits: alpha(3), beta(3), gamma(1), delta(1), epsilon(1). F(0) has three main subunits: a(1), b(2) and c(10-14). The alpha and beta chains form an alternating ring which encloses part of the gamma chain. F(1) is attached to F(0) by a central stalk formed by the gamma and epsilon chains, while a peripheral stalk is formed by the delta and b chains.

It localises to the cell membrane. Its function is as follows. F(1)F(0) ATP synthase produces ATP from ADP in the presence of a proton or sodium gradient. F-type ATPases consist of two structural domains, F(1) containing the extramembraneous catalytic core and F(0) containing the membrane proton channel, linked together by a central stalk and a peripheral stalk. During catalysis, ATP synthesis in the catalytic domain of F(1) is coupled via a rotary mechanism of the central stalk subunits to proton translocation. In terms of biological role, this protein is part of the stalk that links CF(0) to CF(1). It either transmits conformational changes from CF(0) to CF(1) or is implicated in proton conduction. The protein is ATP synthase subunit delta of Alkaliphilus metalliredigens (strain QYMF).